The following is a 122-amino-acid chain: Large ribosomal subunit protein uL14 (122 aa).

The protein belongs to the universal ribosomal protein uL14 family. In terms of assembly, part of the 50S ribosomal subunit. Forms a cluster with proteins L3 and L19. In the 70S ribosome, L14 and L19 interact and together make contacts with the 16S rRNA in bridges B5 and B8.

In terms of biological role, binds to 23S rRNA. Forms part of two intersubunit bridges in the 70S ribosome. The protein is Large ribosomal subunit protein uL14 of Helicobacter pylori (strain J99 / ATCC 700824) (Campylobacter pylori J99).